The chain runs to 86 residues: Large ribosomal subunit protein uL23 (86 aa).

This sequence belongs to the universal ribosomal protein uL23 family. In terms of assembly, part of the 50S ribosomal subunit. Contacts protein L29.

In terms of biological role, binds to 23S rRNA. One of the proteins that surrounds the polypeptide exit tunnel on the outside of the ribosome. The protein is Large ribosomal subunit protein uL23 of Methanococcus maripaludis (strain C6 / ATCC BAA-1332).